The primary structure comprises 631 residues: Methanol dehydrogenase [cytochrome c] subunit 1 (631 aa).

A signal peptide spans 1–32; sequence MNRNTPKARGASSLAMAVAMGLAVLTTAPATA. Cys-135 and Cys-136 are joined by a disulfide. Residues Glu-209 and Asn-293 each contribute to the Ca(2+) site. Asp-335 functions as the Proton acceptor in the catalytic mechanism. A disulfide bridge links Cys-418 with Cys-447.

Belongs to the bacterial PQQ dehydrogenase family. As to quaternary structure, heterotetramer composed of 2 alpha and 2 beta subunits. Pyrroloquinoline quinone serves as cofactor. The cofactor is Ca(2+).

The protein localises to the periplasm. It catalyses the reaction 2 Fe(III)-[cytochrome cL] + a primary alcohol = 2 Fe(II)-[cytochrome cL] + an aldehyde + 2 H(+). In terms of biological role, catalyzes the oxidation of primary alcohols including methanol. This chain is Methanol dehydrogenase [cytochrome c] subunit 1 (moxF), found in Paracoccus denitrificans.